The primary structure comprises 349 residues: MRPGRARALRQFTLSTGKSAGRNSSGRITVFHRGGGSKRLLRRIDLKRSTSSMGIVESIEYDPNRSSQIALVRWIKGGCQKKMNTIEKFAPPRKILEPTTNTISGLFSFSFLPGKVDKRKVACFSPGLMAAYVVVGLPTGMPPLSSSKSAFASKGAGSTKTLVKDVFFSAFSSPKAKRETASLAFASSFGFPRIAVAGAKPAFFAPRMRQKVRGKSTFSLCEVQKGRTHSILWAHRIKGKAGLSWQSFRRQDTLGLVGAAGHKKSKPKTDQGNLPAKPIGERAKQLKALRGLRAKDGACKVDRAPVTYIIASHQLEAGKMVMNCDWSKPSTSSFLQSAQNDHPKPLFTV.

It belongs to the universal ribosomal protein uL2 family. As to quaternary structure, component of the mitochondrial ribosome large subunit.

The protein resides in the mitochondrion. The protein is Large ribosomal subunit protein uL2mz, N-terminal part of Arabidopsis thaliana (Mouse-ear cress).